Consider the following 150-residue polypeptide: Early 4 ORF6/7 control protein (150 aa).

Positions Met1–Pro31 are disordered. The short motif at Met1–Asn58 is the Nuclear localization signal element.

Belongs to the adenoviridae E4-orf6/7 family. As to quaternary structure, interacts with host E2F proteins.

Its subcellular location is the host nucleus. Functionally, modulates viral and host transcriptional activity to promote viral genome replication. Stimulates viral E2a promoter activity by binding and inducing dimerization of host E2F. During viral infection E1A protein binds to cellular retinablastoma (RB) family members and dissociates these repressors from a complex with E2F proteins. Free E2F is then bound to E4orf6/7 which leads to transactivation of viral E2 promoter, and cellular promoters such as E2F-1 promoter. Activation of cellular E2F targets promote cell cycle S phase and thereby possibly favorises viral DNA replication process. The polypeptide is Early 4 ORF6/7 control protein (Human adenovirus C serotype 2 (HAdV-2)).